Here is a 557-residue protein sequence, read N- to C-terminus: Coiled-coil domain-containing protein 22 homolog (557 aa).

Coiled-coil stretches lie at residues 260–350 and 489–554; these read RLGQ…LQSQ and ELTA…AGRN.

It belongs to the CCDC22 family.

The chain is Coiled-coil domain-containing protein 22 homolog from Anopheles gambiae (African malaria mosquito).